The following is a 440-amino-acid chain: Transposon Ty1-MR1 Gag polyprotein (440 aa).

3 stretches are compositionally biased toward polar residues: residues 1–31 (MESQ…TTQD), 46–60 (VSTQ…TPLS), and 137–168 (VGTH…TNQH). Disordered stretches follow at residues 1-88 (MESQ…YPQQ), 137-174 (VGTH…PPPI), and 350-424 (QQES…TTEP). The tract at residues 299-401 (NNGIPINNKV…NSQSRTARAH (103 aa)) is RNA-binding. Residues 363–372 (SPSDEKKDSR) show a composition bias toward basic and acidic residues. Residues 373 to 411 (TYTNTTKPKSITRNSQKPNNSQSRTARAHNVSTFNNSPG) are compositionally biased toward polar residues.

In terms of assembly, homotrimer.

It localises to the cytoplasm. Its function is as follows. Capsid protein (CA) is the structural component of the virus-like particle (VLP), forming the shell that encapsulates the retrotransposons dimeric RNA genome. The particles are assembled from trimer-clustered units and there are holes in the capsid shells that allow for the diffusion of macromolecules. CA also has nucleocapsid-like chaperone activity, promoting primer tRNA(i)-Met annealing to the multipartite primer-binding site (PBS), dimerization of Ty1 RNA and initiation of reverse transcription. This chain is Transposon Ty1-MR1 Gag polyprotein (TY1A-MR1), found in Saccharomyces cerevisiae (strain ATCC 204508 / S288c) (Baker's yeast).